Reading from the N-terminus, the 572-residue chain is Potassium-transporting ATPase potassium-binding subunit (572 aa).

The next 11 membrane-spanning stretches (helical) occupy residues 5 to 25, 71 to 91, 97 to 117, 142 to 162, 188 to 208, 258 to 278, 292 to 312, 387 to 407, 422 to 442, 500 to 520, and 548 to 568; these read LAAG…YVPL, VGYT…LYVL, VLPL…NTAV, GLAV…VALI, ILLP…TIQS, PTPL…VCLT, LTVL…VTWA, GLYG…LLVG, ITMA…GTGI, LGMA…ALAG, and GTVL…GPIA.

This sequence belongs to the KdpA family. As to quaternary structure, the system is composed of three essential subunits: KdpA, KdpB and KdpC.

It is found in the cell membrane. Its function is as follows. Part of the high-affinity ATP-driven potassium transport (or Kdp) system, which catalyzes the hydrolysis of ATP coupled with the electrogenic transport of potassium into the cytoplasm. This subunit binds the extracellular potassium ions and delivers the ions to the membrane domain of KdpB through an intramembrane tunnel. This chain is Potassium-transporting ATPase potassium-binding subunit, found in Mycobacteroides abscessus (strain ATCC 19977 / DSM 44196 / CCUG 20993 / CIP 104536 / JCM 13569 / NCTC 13031 / TMC 1543 / L948) (Mycobacterium abscessus).